The sequence spans 441 residues: MQITETLAEGLKREYTITVPASDLEARVNTKLEEARPEVEMKGFRKGKVPMALLKKQFGPKVMGEAMQESVDEAMQGHLDESGDRPALQPEVKMTNEDWKEGDDIVVSMAYEKLPEIPDVDYKAIKLEKLVVTPGDDEVKEALDNLAENAESFATKKGKAADGDQVVFDFVGTVDGEAFEGGSAEDFPLKLGSGQFIPGFEEQLVGVKAKDEKDVEVSFPEDYQAEHLAGKAAVFACTIKEVKKPVPAEVDDELAKKFGAEDLEALKGQISERLGTEYKGAARAVMKRSLLDQLDDVVSFELPPSLVEAEAKQIAHQLWHEENPEVEGHDHPEIETTEEHTSLAARRVKLGLLLAELGQKNDVTVSDAEMTQAIMTQARQYPGQERAFFEFIQQNQQAQQQVRAPLFEDKVVDFIGEMAEVSEKEVSKDDLKAAVDALDEE.

In terms of domain architecture, PPIase FKBP-type spans glycine 163–alanine 248.

It belongs to the FKBP-type PPIase family. Tig subfamily.

It is found in the cytoplasm. It carries out the reaction [protein]-peptidylproline (omega=180) = [protein]-peptidylproline (omega=0). Functionally, involved in protein export. Acts as a chaperone by maintaining the newly synthesized protein in an open conformation. Functions as a peptidyl-prolyl cis-trans isomerase. This Jannaschia sp. (strain CCS1) protein is Trigger factor.